We begin with the raw amino-acid sequence, 440 residues long: Tuliposide B-converting enzyme 1, amyloplastic (440 aa).

An amyloplast-targeting transit peptide spans 1 to 58 (MSIVSFCSSLPAGPHGFKHGRGTRDMVHMPCIVRRTARSPAQACRLLRWNKYHCAAVP). The active-site Acyl-ester intermediate is the Ser232. Catalysis depends on charge relay system residues Asp325 and His357.

The protein belongs to the AB hydrolase superfamily. Homodimer. In terms of processing, not glycosylated. In terms of tissue distribution, expressed in the pollen grains.

It is found in the plastid. The protein localises to the amyloplast. The catalysed reaction is 6-tuliposide B = tulipalin B + D-glucose. With respect to regulation, inhibited by Ag(+), Cu(2+), Fe(2+), Hg(2+), V(3+) and phenylmethylsulfonyl fluoride (PMSF). Its function is as follows. Lactone-forming carboxylesterase, specifically catalyzing intramolecular transesterification, but not hydrolysis. Involved in the biosynthesis of tulipalins, defensive chemicals that show antimicrobial activities against a broad range of strains of bacteria and fungi. Substrates are 6-tuliposide B &gt; 6-tuliposide A. The chain is Tuliposide B-converting enzyme 1, amyloplastic from Tulipa gesneriana (Garden tulip).